Consider the following 445-residue polypeptide: UDP-N-acetylmuramoylalanine--D-glutamate ligase (445 aa).

ATP is bound at residue 111-117 (GTNGKST).

This sequence belongs to the MurCDEF family.

It is found in the cytoplasm. It carries out the reaction UDP-N-acetyl-alpha-D-muramoyl-L-alanine + D-glutamate + ATP = UDP-N-acetyl-alpha-D-muramoyl-L-alanyl-D-glutamate + ADP + phosphate + H(+). It functions in the pathway cell wall biogenesis; peptidoglycan biosynthesis. Cell wall formation. Catalyzes the addition of glutamate to the nucleotide precursor UDP-N-acetylmuramoyl-L-alanine (UMA). The protein is UDP-N-acetylmuramoylalanine--D-glutamate ligase (murD) of Rickettsia prowazekii (strain Madrid E).